The sequence spans 160 residues: UPF0262 protein BCAN_A0255 (160 aa).

The protein belongs to the UPF0262 family.

The sequence is that of UPF0262 protein BCAN_A0255 from Brucella canis (strain ATCC 23365 / NCTC 10854 / RM-666).